The primary structure comprises 412 residues: Serine hydroxymethyltransferase (412 aa).

Residues Leu-112 and 116–118 (GHL) each bind (6S)-5,6,7,8-tetrahydrofolate. Lys-221 is modified (N6-(pyridoxal phosphate)lysine). Glu-237 serves as a coordination point for (6S)-5,6,7,8-tetrahydrofolate.

It belongs to the SHMT family. As to quaternary structure, homodimer. It depends on pyridoxal 5'-phosphate as a cofactor.

The protein localises to the cytoplasm. The enzyme catalyses (6R)-5,10-methylene-5,6,7,8-tetrahydrofolate + glycine + H2O = (6S)-5,6,7,8-tetrahydrofolate + L-serine. It functions in the pathway one-carbon metabolism; tetrahydrofolate interconversion. The protein operates within amino-acid biosynthesis; glycine biosynthesis; glycine from L-serine: step 1/1. Functionally, catalyzes the reversible interconversion of serine and glycine with tetrahydrofolate (THF) serving as the one-carbon carrier. This reaction serves as the major source of one-carbon groups required for the biosynthesis of purines, thymidylate, methionine, and other important biomolecules. Also exhibits THF-independent aldolase activity toward beta-hydroxyamino acids, producing glycine and aldehydes, via a retro-aldol mechanism. The protein is Serine hydroxymethyltransferase of Malacoplasma penetrans (strain HF-2) (Mycoplasma penetrans).